The chain runs to 564 residues: Phenylalanine--tRNA ligase beta subunit (564 aa).

A B5 domain is found at 286–362; sequence YFQNMLEVNV…IGMGLDSFKP (77 aa). Mg(2+)-binding residues include Asp-340, Asp-346, Glu-349, and Glu-350.

It belongs to the phenylalanyl-tRNA synthetase beta subunit family. Type 2 subfamily. Tetramer of two alpha and two beta subunits. Requires Mg(2+) as cofactor.

The protein resides in the cytoplasm. The catalysed reaction is tRNA(Phe) + L-phenylalanine + ATP = L-phenylalanyl-tRNA(Phe) + AMP + diphosphate + H(+). The sequence is that of Phenylalanine--tRNA ligase beta subunit from Borrelia turicatae (strain 91E135).